The following is a 381-amino-acid chain: NF-kappa-B inhibitor-like protein 1 (381 aa).

Residues 1–34 (MSNPSPQVPEEEASTSVCRPKSSMASTSRRQRRE) form a disordered region. ANK repeat units follow at residues 64-93 (GQPPPLHRACARHDAPALCLLLRLGADPAH) and 97-133 (HGDTALHAAARQGPDAYTDFFLPLLSRCPSAMGIKNK). 3 disordered regions span residues 131–167 (KNKDGETPGQILGWGPPWDSAEEEEEDDASKEREWRQ), 186–242 (GDAS…QEEE), and 256–294 (ELRESRARRAQEALGDREPKPARAGPRAEHPRGAGRGSL). Position 150 is a phosphoserine (serine 150). Acidic residues predominate over residues 150 to 159 (SAEEEEEDDA). Basic and acidic residues predominate over residues 256-287 (ELRESRARRAQEALGDREPKPARAGPRAEHPR).

As to quaternary structure, interacts with CACTIN (via N-terminal domain); the interaction occurs in a pro-inflammatory-independent manner.

The protein localises to the nucleus. Involved in the regulation of innate immune response. Acts as negative regulator of Toll-like receptor and interferon-regulatory factor (IRF) signaling pathways. Contributes to the negative regulation of transcriptional activation of NF-kappa-B target genes in response to endogenous pro-inflammatory stimuli. The protein is NF-kappa-B inhibitor-like protein 1 (NFKBIL1) of Macaca mulatta (Rhesus macaque).